The following is a 505-amino-acid chain: 2,3-bisphosphoglycerate-independent phosphoglycerate mutase (505 aa).

Mn(2+) contacts are provided by D15 and S65. Residue S65 is the Phosphoserine intermediate of the active site. Residues H126, 156–157 (RD), R187, R193, 260–263 (RPDR), and K333 each bind substrate. Residues D398, H402, D439, H440, and H457 each contribute to the Mn(2+) site.

The protein belongs to the BPG-independent phosphoglycerate mutase family. Monomer. Mn(2+) serves as cofactor.

The enzyme catalyses (2R)-2-phosphoglycerate = (2R)-3-phosphoglycerate. Its pathway is carbohydrate degradation; glycolysis; pyruvate from D-glyceraldehyde 3-phosphate: step 3/5. Functionally, catalyzes the interconversion of 2-phosphoglycerate and 3-phosphoglycerate. The protein is 2,3-bisphosphoglycerate-independent phosphoglycerate mutase of Mycoplasmopsis pulmonis (strain UAB CTIP) (Mycoplasma pulmonis).